A 428-amino-acid chain; its full sequence is Glutamate-1-semialdehyde 2,1-aminomutase (428 aa).

K267 is modified (N6-(pyridoxal phosphate)lysine).

The protein belongs to the class-III pyridoxal-phosphate-dependent aminotransferase family. HemL subfamily. Homodimer. Pyridoxal 5'-phosphate is required as a cofactor.

The protein resides in the cytoplasm. It carries out the reaction (S)-4-amino-5-oxopentanoate = 5-aminolevulinate. It functions in the pathway porphyrin-containing compound metabolism; protoporphyrin-IX biosynthesis; 5-aminolevulinate from L-glutamyl-tRNA(Glu): step 2/2. This chain is Glutamate-1-semialdehyde 2,1-aminomutase, found in Flavobacterium psychrophilum (strain ATCC 49511 / DSM 21280 / CIP 103535 / JIP02/86).